Reading from the N-terminus, the 125-residue chain is Neuropeptide B (125 aa).

The signal sequence occupies residues 1 to 24 (MARSATLAAAALALCLLLAPPGLA). A disordered region spans residues 54-73 (RRSQPYRGAEPPGGAGASPE). Residues 56–125 (SQPYRGAEPP…SLRAADCLAA (70 aa)) constitute a propeptide that is removed on maturation.

Belongs to the neuropeptide B/W family. Widely expressed in the central nervous system. High levels are found in substantia nigra, hypothalamus, hippocampus, spinal cord, placenta and fetal brain; lower levels are found in testis, uterus and ovary. Also detected at high levels in colorectal adenocarcinoma.

It is found in the secreted. May be involved in the regulation of feeding, neuroendocrine system, memory, learning and in the afferent pain pathway. This is Neuropeptide B (NPB) from Homo sapiens (Human).